Consider the following 225-residue polypeptide: 2-C-methyl-D-erythritol 4-phosphate cytidylyltransferase (225 aa).

The protein belongs to the IspD/TarI cytidylyltransferase family. IspD subfamily.

The enzyme catalyses 2-C-methyl-D-erythritol 4-phosphate + CTP + H(+) = 4-CDP-2-C-methyl-D-erythritol + diphosphate. The protein operates within isoprenoid biosynthesis; isopentenyl diphosphate biosynthesis via DXP pathway; isopentenyl diphosphate from 1-deoxy-D-xylulose 5-phosphate: step 2/6. Its function is as follows. Catalyzes the formation of 4-diphosphocytidyl-2-C-methyl-D-erythritol from CTP and 2-C-methyl-D-erythritol 4-phosphate (MEP). The chain is 2-C-methyl-D-erythritol 4-phosphate cytidylyltransferase from Cereibacter sphaeroides (strain ATCC 17023 / DSM 158 / JCM 6121 / CCUG 31486 / LMG 2827 / NBRC 12203 / NCIMB 8253 / ATH 2.4.1.) (Rhodobacter sphaeroides).